A 381-amino-acid chain; its full sequence is Succinyl-diaminopimelate desuccinylase (381 aa).

H69 lines the Zn(2+) pocket. The active site involves D71. A Zn(2+)-binding site is contributed by D103. E137 functions as the Proton acceptor in the catalytic mechanism. Residues E138, E166, and H355 each coordinate Zn(2+).

Belongs to the peptidase M20A family. DapE subfamily. In terms of assembly, homodimer. Requires Zn(2+) as cofactor. Co(2+) serves as cofactor.

The catalysed reaction is N-succinyl-(2S,6S)-2,6-diaminopimelate + H2O = (2S,6S)-2,6-diaminopimelate + succinate. It functions in the pathway amino-acid biosynthesis; L-lysine biosynthesis via DAP pathway; LL-2,6-diaminopimelate from (S)-tetrahydrodipicolinate (succinylase route): step 3/3. Its function is as follows. Catalyzes the hydrolysis of N-succinyl-L,L-diaminopimelic acid (SDAP), forming succinate and LL-2,6-diaminopimelate (DAP), an intermediate involved in the bacterial biosynthesis of lysine and meso-diaminopimelic acid, an essential component of bacterial cell walls. This is Succinyl-diaminopimelate desuccinylase from Rickettsia massiliae (strain Mtu5).